The primary structure comprises 344 residues: Protein L-Myc-1-A (344 aa).

Disordered stretches follow at residues 100-162 (RLTT…DDEI) and 209-261 (PPEP…EDIV). 3 stretches are compositionally biased toward polar residues: residues 102-112 (TTASPRATNPQ), 123-133 (PGVNSIEQNAN), and 236-255 (PALQ…SGSS). The bHLH domain occupies 261–313 (VKKKNHNYLERKRRNDLRSRFLALREEVPSLTRSTKTPKVVVLSKATEFLKGL). The segment at 313-341 (LVIQEQQLTAEKFKLWSRHQQLLRRISHL) is leucine-zipper.

As to quaternary structure, efficient DNA binding requires dimerization with another bHLH protein. Binds DNA as a heterodimer with MAX. In terms of tissue distribution, high levels in oocytes, modest levels in kidney and low levels in spleen.

The protein resides in the nucleus. This chain is Protein L-Myc-1-A (mycl1-a), found in Xenopus laevis (African clawed frog).